A 46-amino-acid polypeptide reads, in one-letter code: Photosystem II reaction center protein K (46 aa).

The propeptide occupies 1-9 (MLILFNTFA). A helical transmembrane segment spans residues 25 to 45 (LPLIPLFFFLLVFVWQAAVGF).

It belongs to the PsbK family. As to quaternary structure, PSII is composed of 1 copy each of membrane proteins PsbA, PsbB, PsbC, PsbD, PsbE, PsbF, PsbH, PsbI, PsbJ, PsbK, PsbL, PsbM, PsbT, PsbX, PsbY, Psb30/Ycf12, peripheral proteins PsbO, CyanoQ (PsbQ), PsbU, PsbV and a large number of cofactors. It forms dimeric complexes.

The protein localises to the cellular thylakoid membrane. Its function is as follows. One of the components of the core complex of photosystem II (PSII). PSII is a light-driven water:plastoquinone oxidoreductase that uses light energy to abstract electrons from H(2)O, generating O(2) and a proton gradient subsequently used for ATP formation. It consists of a core antenna complex that captures photons, and an electron transfer chain that converts photonic excitation into a charge separation. This chain is Photosystem II reaction center protein K, found in Prochlorococcus marinus (strain MIT 9301).